A 599-amino-acid polypeptide reads, in one-letter code: Flap endonuclease GEN-like 1 (599 aa).

The interval 1 to 96 (MGVGGNFWDL…ISRFFRSSGI (96 aa)) is N-domain. An XPG-N domain region spans residues 2–95 (GVGGNFWDLL…RISRFFRSSG (94 aa)). Asp31, Asp75, Glu140, Glu142, Asp161, Asp163, and Asp213 together coordinate Mg(2+). The XPG-I domain stretch occupies residues 128 to 213 (ELLGIPVLKA…IAISLLVGND (86 aa)). The I-domain stretch occupies residues 128-217 (ELLGIPVLKA…LLVGNDYDSG (90 aa)). Positions 213-407 (DYDSGGVLGI…LLPMLSTIYL (195 aa)) are 5'-3' exonuclease domain. 2 disordered regions span residues 522-545 (RESK…MGVQ) and 559-599 (AAGQ…LLFG). Polar residues-rich tracts occupy residues 563–572 (SIETGGSSKA) and 580–590 (ATSTSSSNLTK).

It belongs to the XPG/RAD2 endonuclease family. GEN subfamily. Requires Mg(2+) as cofactor.

The protein resides in the nucleus. Its function is as follows. Endonuclease which cleaves flap structures at the junction between single-stranded DNA and double-stranded DNA with a specific cleavage site in the 5' overhang strand exactly one nucleotide 3' of the branch point. Structure- and sequence-specific nuclease that resolves holliday junctions (HJs) by symmetrically oriented incisions in two opposing strands near the junction point, thus leading to ligatable products; HJs are physical links between homologous DNA molecules that arise as central intermediary structures during homologous recombination and repair in meiotic and somatic cells. Structure-specific nuclease with 5'-flap endonuclease activity, preferentially cleaving static flaps 5' overhang strand exactly one nucleotide in the 3' direction of the branch point. Also able to cleave double-stranded flap strand 1 exactly at the branch point. The chain is Flap endonuclease GEN-like 1 from Arabidopsis thaliana (Mouse-ear cress).